We begin with the raw amino-acid sequence, 387 residues long: Succinate--CoA ligase [ADP-forming] subunit beta (387 aa).

An ATP-grasp domain is found at 9 to 244; that stretch reads KEVLRKFGVA…LNEEEPSEIE (236 aa). ATP contacts are provided by residues Lys-46, 53 to 55, Glu-99, Cys-102, and Glu-107; that span reads GRG. Mg(2+) contacts are provided by Asn-199 and Asp-213. Substrate is bound by residues Asn-264 and 321–323; that span reads GIM.

Belongs to the succinate/malate CoA ligase beta subunit family. In terms of assembly, heterotetramer of two alpha and two beta subunits. The cofactor is Mg(2+).

It carries out the reaction succinate + ATP + CoA = succinyl-CoA + ADP + phosphate. The catalysed reaction is GTP + succinate + CoA = succinyl-CoA + GDP + phosphate. Its pathway is carbohydrate metabolism; tricarboxylic acid cycle; succinate from succinyl-CoA (ligase route): step 1/1. Its function is as follows. Succinyl-CoA synthetase functions in the citric acid cycle (TCA), coupling the hydrolysis of succinyl-CoA to the synthesis of either ATP or GTP and thus represents the only step of substrate-level phosphorylation in the TCA. The beta subunit provides nucleotide specificity of the enzyme and binds the substrate succinate, while the binding sites for coenzyme A and phosphate are found in the alpha subunit. The sequence is that of Succinate--CoA ligase [ADP-forming] subunit beta from Bdellovibrio bacteriovorus (strain ATCC 15356 / DSM 50701 / NCIMB 9529 / HD100).